Reading from the N-terminus, the 335-residue chain is 2-acylglycerol O-acyltransferase 1 (335 aa).

2 helical membrane-spanning segments follow: residues 24–44 (WLLSFLLFAQVCLGIIVFLII) and 104–124 (YIFGFHPHGVLVVGAFGNFCT). N-linked (GlcNAc...) asparagine glycans are attached at residues N125 and N180.

This sequence belongs to the diacylglycerol acyltransferase family.

It localises to the endoplasmic reticulum membrane. It catalyses the reaction a 2-acylglycerol + an acyl-CoA = a 1,2-diacylglycerol + CoA. It carries out the reaction 2-(9Z-octadecenoyl)-glycerol + butanoyl-CoA = 1-butanoyl-2-(9Z-octadecenoyl)-glycerol + CoA. The enzyme catalyses 2-(9Z-octadecenoyl)-glycerol + octanoyl-CoA = 1-octanoyl-2-(9Z-octadecenoyl)-glycerol + CoA. The catalysed reaction is 2-(9Z-octadecenoyl)-glycerol + dodecanoyl-CoA = 1-dodecanoyl-2-(9Z-octadecenoyl)-glycerol + CoA. It catalyses the reaction 2-(9Z-octadecenoyl)-glycerol + tetradecanoyl-CoA = 1-tetradecanoyl-2-(9Z-octadecenoyl)-glycerol + CoA. It carries out the reaction 2-(9Z-octadecenoyl)-glycerol + hexadecanoyl-CoA = 1-hexadecanoyl-2-(9Z-octadecenoyl)-glycerol + CoA. The enzyme catalyses 2-(9Z-octadecenoyl)-glycerol + octadecanoyl-CoA = 1-octadecanoyl-2-(9Z-octadecenoyl)-glycerol + CoA. The catalysed reaction is eicosanoyl-CoA + 2-(9Z-octadecenoyl)-glycerol = 1-eicosanoyl-2-(9Z-octadecenoyl)-glycerol + CoA. It catalyses the reaction 2-(9Z-octadecenoyl)-glycerol + (9Z)-octadecenoyl-CoA = 1,2-di-(9Z-octadecenoyl)-glycerol + CoA. It carries out the reaction 2-(9Z-octadecenoyl)-glycerol + (9Z,12Z)-octadecadienoyl-CoA = 1-(9Z,12Z-octadecadienoyl)-2-(9Z-octadecenoyl)-glycerol + CoA. The enzyme catalyses 2-(9Z-octadecenoyl)-glycerol + (5Z,8Z,11Z,14Z)-eicosatetraenoyl-CoA = 1-(5Z,8Z,11Z,14Z-eicosatetraenoyl)-2-(9Z-octadecenoyl)-glycerol + CoA. The catalysed reaction is a 2-acylglycerol + an acyl-CoA = a 1,2-diacyl-sn-glycerol + CoA. It catalyses the reaction a 2-acylglycerol + an acyl-CoA = a 2,3-diacyl-sn-glycerol + CoA. It carries out the reaction a 1-acylglycerol + an acyl-CoA = a 1,2-diacylglycerol + CoA. The enzyme catalyses 1-dodecanoylglycerol + (9Z)-octadecenoyl-CoA = 1-dodecanoyl-2-(9Z-octadecenoyl)-glycerol + CoA. The catalysed reaction is 1-tetradecanoylglycerol + (9Z)-octadecenoyl-CoA = 1-tetradecanoyl-2-(9Z-octadecenoyl)-glycerol + CoA. It catalyses the reaction 1-hexadecanoylglycerol + (9Z)-octadecenoyl-CoA = 1-hexadecanoyl-2-(9Z-octadecenoyl)-glycerol + CoA. It carries out the reaction 1-(9Z-octadecenoyl)-glycerol + (9Z)-octadecenoyl-CoA = 1,2-di-(9Z-octadecenoyl)-glycerol + CoA. The enzyme catalyses 1-(9Z,12Z-octadecadienoyl)-glycerol + (9Z)-octadecenoyl-CoA = 1-(9Z,12Z-octadecadienoyl)-2-(9Z-octadecenoyl)-glycerol + CoA. The catalysed reaction is 1-(9Z,12Z,15Z-octadecatrienoyl)-glycerol + (9Z)-octadecenoyl-CoA = 1-(9Z,12Z,15Z-octadecatrienoyl)-2-(9Z-octadecenoyl)-glycerol + CoA. It catalyses the reaction 1-(5Z,8Z,11Z,14Z-eicosatetraenoyl)-glycerol + (9Z)-octadecenoyl-CoA = 1-(5Z,8Z,11Z,14Z-eicosatetraenoyl)-2-(9Z-octadecenoyl)-glycerol + CoA. It carries out the reaction a 1-acylglycerol + an acyl-CoA = a 1,3-diacylglycerol + CoA. The enzyme catalyses 1-dodecanoylglycerol + (9Z)-octadecenoyl-CoA = 1-dodecanoyl-3-(9Z-octadecenoyl)-glycerol + CoA. The catalysed reaction is 1-hexadecanoylglycerol + (9Z)-octadecenoyl-CoA = 1-(9Z-octadecenoyl)-3-hexadecanoylglycerol + CoA. It catalyses the reaction 1-octadecanoylglycerol + (9Z)-octadecenoyl-CoA = 1-octadecanoyl-3-(9Z-octadecenoyl)-glycerol + CoA. It carries out the reaction 1-(9Z-octadecenoyl)-sn-glycerol + (9Z)-octadecenoyl-CoA = 1,3-di-(9Z-octadecenoyl)-glycerol + CoA. The enzyme catalyses 1-(9Z,12Z-octadecadienoyl)-glycerol + (9Z)-octadecenoyl-CoA = 1-(9Z-octadecenoyl)-3-(9Z,12Z-octadecadienoyl)-glycerol + CoA. The catalysed reaction is 1-(9Z,12Z,15Z-octadecatrienoyl)-glycerol + (9Z)-octadecenoyl-CoA = 1-(9Z,12Z,15Z-octadecatrienoyl)-3-(9Z-octadecenoyl)-glycerol + CoA. It catalyses the reaction a 1-acyl-sn-glycerol + an acyl-CoA = a 1,3-diacyl-sn-glycerol + CoA. It carries out the reaction a 3-acyl-sn-glycerol + an acyl-CoA = a 1,3-diacyl-sn-glycerol + CoA. The enzyme catalyses 3-octadecanoyl-sn-glycerol + (9Z)-octadecenoyl-CoA = 1-(9Z-octadecenoyl)-3-octadecanoyl-sn-glycerol + CoA. Its pathway is glycerolipid metabolism; triacylglycerol biosynthesis. Its function is as follows. Involved in glycerolipid synthesis and lipid metabolism. Catalyzes the formation of diacylglycerol, the precursor of triacylglycerol, by transferring the acyl chain of a fatty acyl-CoA to a monoacylglycerol, mainly at the sn-1 or sn-3 positions. It uses both sn-2-monoacylglycerol (2-acylglycerol) and sn-1-monoacylglycerol (1-acyl-sn-glycerol) equally well as substrates, and uses sn-3-monoacylglycerol (3-acyl-sn-glycerol) with lower efficiency. Probably not involved in absorption of dietary fat in the small intestine. The chain is 2-acylglycerol O-acyltransferase 1 (MOGAT1) from Bos taurus (Bovine).